The following is a 551-amino-acid chain: Urocanate hydratase (551 aa).

NAD(+) is bound by residues 48-49 (GG), Gln126, 172-174 (GMG), Glu192, Arg197, 238-239 (NA), 259-263 (QTSAH), 269-270 (YI), and Tyr318. Cys406 is an active-site residue. Gly488 contributes to the NAD(+) binding site.

This sequence belongs to the urocanase family. Requires NAD(+) as cofactor.

The protein localises to the cytoplasm. It catalyses the reaction 4-imidazolone-5-propanoate = trans-urocanate + H2O. It functions in the pathway amino-acid degradation; L-histidine degradation into L-glutamate; N-formimidoyl-L-glutamate from L-histidine: step 2/3. Its function is as follows. Catalyzes the conversion of urocanate to 4-imidazolone-5-propionate. The polypeptide is Urocanate hydratase (Geobacillus kaustophilus (strain HTA426)).